Consider the following 74-residue polypeptide: MLDQFIKHRLKLKENNKLGALTFQIVLNGIFGRTNSIYFALYEPSLHGSVCGQLIMLEVFTEMVSDDLLWCNTD.

It is found in the mitochondrion. This is an uncharacterized protein from Marchantia polymorpha (Common liverwort).